We begin with the raw amino-acid sequence, 452 residues long: Protein CSN12 homolog (452 aa).

The PCI domain occupies 249–446 (VTFKYYEGVL…GFVVLSKSGA (198 aa)).

The protein belongs to the CSN12 family.

The polypeptide is Protein CSN12 homolog (csn-8) (Neurospora crassa (strain ATCC 24698 / 74-OR23-1A / CBS 708.71 / DSM 1257 / FGSC 987)).